Here is a 167-residue protein sequence, read N- to C-terminus: MKIIAIAPRIGAAVLSLVAFSVMASTGERRSGAGSTFKVKFSDFQAYNYLIALNVILFVYSTVQLVMLVNSNHNSSFSSPFKWVLGVYICDQLLAFLLFSASSSAATASELSRHGLHNIWPPACATWKLWTFCSKAEAAVAMSFLSSFFIITSSILSGYHLSKVPAV.

Residues 1–2 are Cytoplasmic-facing; that stretch reads MK. Residues 3 to 23 form a helical membrane-spanning segment; the sequence is IIAIAPRIGAAVLSLVAFSVM. Topologically, residues 24–48 are extracellular; it reads ASTGERRSGAGSTFKVKFSDFQAYN. Residues 49 to 69 form a helical membrane-spanning segment; the sequence is YLIALNVILFVYSTVQLVMLV. Residues 70-80 lie on the Cytoplasmic side of the membrane; that stretch reads NSNHNSSFSSP. The helical transmembrane segment at 81 to 101 threads the bilayer; the sequence is FKWVLGVYICDQLLAFLLFSA. At 102-137 the chain is on the extracellular side; it reads SSSAATASELSRHGLHNIWPPACATWKLWTFCSKAE. Residues 138-158 form a helical membrane-spanning segment; sequence AAVAMSFLSSFFIITSSILSG. Residues 159–167 are Cytoplasmic-facing; it reads YHLSKVPAV.

It belongs to the Casparian strip membrane proteins (CASP) family. Homodimer and heterodimers.

The protein localises to the cell membrane. This chain is CASP-like protein 3, found in Osmunda lancea (Fern).